The chain runs to 681 residues: UvrABC system protein B (681 aa).

Positions 30–419 (QGVRDGRHWQ…GEVVELLVRP (390 aa)) constitute a Helicase ATP-binding domain. An ATP-binding site is contributed by 43-50 (GVTGSGKT). The short motif at 96 to 119 (YYDFYQPEAYLPSLDKYIAKDLRI) is the Beta-hairpin element. Positions 435–601 (QIDNLLAEIR…SIVKSVDQIL (167 aa)) constitute a Helicase C-terminal domain. In terms of domain architecture, UVR spans 641 to 676 (YAIVEGLRLEMQEAAEHMEYEKAAYLRDEITKMEQV).

Belongs to the UvrB family. Forms a heterotetramer with UvrA during the search for lesions. Interacts with UvrC in an incision complex.

It localises to the cytoplasm. Functionally, the UvrABC repair system catalyzes the recognition and processing of DNA lesions. A damage recognition complex composed of 2 UvrA and 2 UvrB subunits scans DNA for abnormalities. Upon binding of the UvrA(2)B(2) complex to a putative damaged site, the DNA wraps around one UvrB monomer. DNA wrap is dependent on ATP binding by UvrB and probably causes local melting of the DNA helix, facilitating insertion of UvrB beta-hairpin between the DNA strands. Then UvrB probes one DNA strand for the presence of a lesion. If a lesion is found the UvrA subunits dissociate and the UvrB-DNA preincision complex is formed. This complex is subsequently bound by UvrC and the second UvrB is released. If no lesion is found, the DNA wraps around the other UvrB subunit that will check the other stand for damage. This is UvrABC system protein B from Chlorobium chlorochromatii (strain CaD3).